We begin with the raw amino-acid sequence, 122 residues long: Allatotropin (122 aa).

Residues 1 to 23 (MRVILAITLLFVAGSFIATASKG) form the signal peptide. Positions 24 to 40 (RNYPRFFKHRMKLREIR) are excised as a propeptide. Phe-53 bears the Phenylalanine amide mark. Residues 57 to 122 (ESPAERIPDL…GDDSKKGTIA (66 aa)) constitute a propeptide that is removed on maturation.

Expressed in brain and ventral ganglia but not in the retrocerebral complex (at protein level).

The protein localises to the secreted. In terms of biological role, neuropeptide stimulator of juvenile hormone synthesis. The polypeptide is Allatotropin (Camponotus floridanus (Florida carpenter ant)).